Consider the following 191-residue polypeptide: Peptidyl-tRNA hydrolase (191 aa).

TRNA is bound at residue Tyr17. His22 (proton acceptor) is an active-site residue. TRNA contacts are provided by Tyr68, Asn70, and Asn116.

This sequence belongs to the PTH family. In terms of assembly, monomer.

The protein localises to the cytoplasm. The enzyme catalyses an N-acyl-L-alpha-aminoacyl-tRNA + H2O = an N-acyl-L-amino acid + a tRNA + H(+). Its function is as follows. Hydrolyzes ribosome-free peptidyl-tRNAs (with 1 or more amino acids incorporated), which drop off the ribosome during protein synthesis, or as a result of ribosome stalling. In terms of biological role, catalyzes the release of premature peptidyl moieties from peptidyl-tRNA molecules trapped in stalled 50S ribosomal subunits, and thus maintains levels of free tRNAs and 50S ribosomes. The polypeptide is Peptidyl-tRNA hydrolase (Francisella tularensis subsp. holarctica (strain FTNF002-00 / FTA)).